A 123-amino-acid chain; its full sequence is MAKLTKAEFVSALKEMNIKEVMELIDGLKEEFGIDPTAVVAAAAAPAAEAAEEKTTFNVTLKSDGGNKLAVIKAVKDLLGLGLMDAKKLVESAPVLLKENVKKEEAEELKAKLTEAKAEITLD.

It belongs to the bacterial ribosomal protein bL12 family. Homodimer. Part of the ribosomal stalk of the 50S ribosomal subunit. Forms a multimeric L10(L12)X complex, where L10 forms an elongated spine to which 2 to 4 L12 dimers bind in a sequential fashion. Binds GTP-bound translation factors.

Its function is as follows. Forms part of the ribosomal stalk which helps the ribosome interact with GTP-bound translation factors. Is thus essential for accurate translation. This chain is Large ribosomal subunit protein bL12, found in Metamycoplasma arthritidis (strain 158L3-1) (Mycoplasma arthritidis).